The chain runs to 132 residues: MYSWYFPKDSPSTGMGHRHDWEHAIVFIDNPDVPEPKILACSVSSHAGYKKYNPCPPWVIDGTSLKVRYKHGWPLNHDLDTTGDAGTFQDLIMWDQMTEDARRALNSVHFGSANTPFNDGNFKPKLEKAWPF.

The short motif at 1–9 (MYSWYFPKD) is the Conserved undecapeptide motif I element. The Hepta-peptide GHRHDWE motif II signature appears at 16-22 (GHRHDWE).

The protein belongs to the Necrosis inducing protein (NPP1) family.

It is found in the secreted. In terms of biological role, secreted effector that contributes moderately to virulence during infection by P.capsici. Causes only small yellow areas at 3 days after inoculation of host C.annuum leaves; these areas expand somewhat and became necrotic at 7 days after inoculation. Leads only to chlorotic areas, without necrosis at 7 days after non-host N.benthamiana leaves infection. The sequence is that of NLP effector protein 15 from Phytophthora capsici.